The primary structure comprises 110 residues: Putative UPF0377 protein YIR040C (110 aa).

This sequence belongs to the UPF0377 family.

The sequence is that of Putative UPF0377 protein YIR040C from Saccharomyces cerevisiae (strain ATCC 204508 / S288c) (Baker's yeast).